Reading from the N-terminus, the 386-residue chain is Chaperone protein DnaJ (386 aa).

Positions 4 to 68 (NFYDVLGVSR…QKRQQYDQLG (65 aa)) constitute a J domain. Composition is skewed to basic and acidic residues over residues 22 to 35 (KAYR…HPDV) and 43 to 79 (ERFK…DKRG). Positions 22–132 (KAYRKQAAEH…GGNRPRQGQD (111 aa)) are disordered. Composition is skewed to gly residues over residues 80-104 (ATGG…GAGG) and 113-125 (FGGG…GGGN). A CR-type zinc finger spans residues 147 to 229 (GATKEVTLTR…CGGDGVVREE (83 aa)). The Zn(2+) site is built by Cys-160, Cys-163, Cys-177, Cys-180, Cys-203, Cys-206, Cys-217, and Cys-220. CXXCXGXG motif repeat units follow at residues 160–167 (CDTCDGAG), 177–184 (CSQCNGRG), 203–210 (CPRCEGSG), and 217–224 (CADCGGDG).

Belongs to the DnaJ family. Homodimer. It depends on Zn(2+) as a cofactor.

Its subcellular location is the cytoplasm. Participates actively in the response to hyperosmotic and heat shock by preventing the aggregation of stress-denatured proteins and by disaggregating proteins, also in an autonomous, DnaK-independent fashion. Unfolded proteins bind initially to DnaJ; upon interaction with the DnaJ-bound protein, DnaK hydrolyzes its bound ATP, resulting in the formation of a stable complex. GrpE releases ADP from DnaK; ATP binding to DnaK triggers the release of the substrate protein, thus completing the reaction cycle. Several rounds of ATP-dependent interactions between DnaJ, DnaK and GrpE are required for fully efficient folding. Also involved, together with DnaK and GrpE, in the DNA replication of plasmids through activation of initiation proteins. This is Chaperone protein DnaJ from Halorubrum lacusprofundi (strain ATCC 49239 / DSM 5036 / JCM 8891 / ACAM 34).